Here is a 787-residue protein sequence, read N- to C-terminus: Alpha-glucosidase 2 (787 aa).

Active-site residues include D407 and E410. D484 (proton donor) is an active-site residue.

This sequence belongs to the glycosyl hydrolase 31 family. In terms of assembly, homohexamer.

The enzyme catalyses Hydrolysis of terminal, non-reducing (1-&gt;4)-linked alpha-D-glucose residues with release of alpha-D-glucose.. The sequence is that of Alpha-glucosidase 2 from Bacillus thermoamyloliquefaciens.